The primary structure comprises 128 residues: Small ribosomal subunit protein bS6 (128 aa).

This sequence belongs to the bacterial ribosomal protein bS6 family.

Binds together with bS18 to 16S ribosomal RNA. In Acinetobacter baylyi (strain ATCC 33305 / BD413 / ADP1), this protein is Small ribosomal subunit protein bS6.